The primary structure comprises 154 residues: Lipoprotein signal peptidase (154 aa).

3 consecutive transmembrane segments (helical) span residues 7 to 27 (VLYL…KNYI), 58 to 78 (IFSG…AVVV), and 88 to 108 (NWLF…NFID). Catalysis depends on residues aspartate 117 and aspartate 133. Residues 128 to 148 (IFNIADSAITVGIVLVFIYLI) form a helical membrane-spanning segment.

It belongs to the peptidase A8 family.

Its subcellular location is the cell membrane. It catalyses the reaction Release of signal peptides from bacterial membrane prolipoproteins. Hydrolyzes -Xaa-Yaa-Zaa-|-(S,diacylglyceryl)Cys-, in which Xaa is hydrophobic (preferably Leu), and Yaa (Ala or Ser) and Zaa (Gly or Ala) have small, neutral side chains.. The protein operates within protein modification; lipoprotein biosynthesis (signal peptide cleavage). Functionally, this protein specifically catalyzes the removal of signal peptides from prolipoproteins. The protein is Lipoprotein signal peptidase of Lactobacillus gasseri (strain ATCC 33323 / DSM 20243 / BCRC 14619 / CIP 102991 / JCM 1131 / KCTC 3163 / NCIMB 11718 / NCTC 13722 / AM63).